Consider the following 440-residue polypeptide: IAA-amino acid hydrolase ILR1-like 4 (440 aa).

A signal peptide spans 1-23; sequence MSFFKWVSFVLILHLLNPTLISC. Mn(2+)-binding residues include Cys-134, His-136, Glu-170, His-194, and His-397. The Prevents secretion from ER motif lies at 437–440; it reads KDEL.

It belongs to the peptidase M20 family. Mn(2+) serves as cofactor. Expressed in leaves, stems, roots, siliques and flowers. Detected in the vascular tissue of cotyledons and roots, in adult leaves, stems, siliques, petals, hydathodes and in silique abscission zones and funicles.

The protein resides in the endoplasmic reticulum lumen. It carries out the reaction a jasmonyl-L-amino acid + H2O = a jasmonate + an L-alpha-amino acid. Hydrolyzes certain amino acid conjugates of the plant growth regulator indole-3-acetic acid (IAA), including IAA-Ala, IAA-Asn, IAA-Cys, IAA-Glu, IAA-Met, IAA-Ser and IAA-Gly. Has a lower efficiency with IAA-Phe, IAA-Leu and IAA-Val and no activity with IAA-Ile. Important for IAA-Leu hydrolysis in roots. Also hydrolyzes amino acid conjugates of jasmonic acid and 12-hydroxy jasmonic acid. In Arabidopsis thaliana (Mouse-ear cress), this protein is IAA-amino acid hydrolase ILR1-like 4.